The following is a 76-amino-acid chain: Tautomerase PptA (76 aa).

The active-site Proton acceptor; via imino nitrogen is the Pro2.

It belongs to the 4-oxalocrotonate tautomerase family. PptA subfamily. Homodimer.

It localises to the cytoplasm. This is Tautomerase PptA from Cronobacter sakazakii (strain ATCC BAA-894) (Enterobacter sakazakii).